Here is a 133-residue protein sequence, read N- to C-terminus: Small ribosomal subunit protein uS8 (133 aa).

Belongs to the universal ribosomal protein uS8 family. Part of the 30S ribosomal subunit. Contacts proteins S5 and S12.

One of the primary rRNA binding proteins, it binds directly to 16S rRNA central domain where it helps coordinate assembly of the platform of the 30S subunit. The protein is Small ribosomal subunit protein uS8 of Mycoplasmoides gallisepticum (strain R(low / passage 15 / clone 2)) (Mycoplasma gallisepticum).